The following is a 1438-amino-acid chain: Pyochelin synthetase PchE (1438 aa).

The 80-residue stretch at 6 to 85 (DSRTALRDWL…AWLDLLACAD (80 aa)) folds into the Carrier 1 domain. S46 carries the post-translational modification O-(pantetheine 4'-phosphoryl)serine. A condensation/cyclization region spans residues 136-442 (RTRDVDPQRL…ARRQGQPRSA (307 aa)). Residues 563-950 (RAAEAPDADA…GRVDQQVKVR (388 aa)) form an adenylation region. The region spanning 1350 to 1425 (EPLEAHEQAL…GLARHLQVQT (76 aa)) is the Carrier 2 domain. O-(pantetheine 4'-phosphoryl)serine is present on S1385.

This sequence belongs to the NRP synthetase family. It depends on pantetheine 4'-phosphate as a cofactor.

It catalyses the reaction holo-[peptidyl-carrier protein] + L-cysteine + ATP = L-cysteinyl-[peptidyl-carrier protein] + AMP + diphosphate. It participates in siderophore biosynthesis. The protein operates within antifungal biosynthesis. Functionally, involved in the biosynthesis of the siderophore pyochelin. Accepts salicylate activated by PchD at the first peptidyl carrier domain (ArCP), and activates and fixes one molecule of cysteine at the second peptidyl carrier domain (PCP1) via a thioester linkage to the phosphopanthetheine moiety. Then catalyzes the condensation reaction between the salicylate bound to the first site and the cysteine bound to the second site, and the cyclization of the cysteine to form the salicyl-thiazolinyl-S-PCP1 intermediate at the second site. When this intermediate is released by the action of a thioesterase, it produces the antifungal antibiotic dihydroaeruginoic acid (Dha or hydroxyphenyl-thiazolinyl-carboxylate). This chain is Pyochelin synthetase PchE, found in Pseudomonas aeruginosa (strain ATCC 15692 / DSM 22644 / CIP 104116 / JCM 14847 / LMG 12228 / 1C / PRS 101 / PAO1).